The primary structure comprises 448 residues: Dual specificity mitogen-activated protein kinase kinase 5 (448 aa).

The segment at 18–25 (VIRIKIPN) is interaction with MAPK7. Residues 18 to 109 (VIRIKIPNSG…EPLQIFPRAC (92 aa)) form the PB1 domain. Positions 64 to 68 (DEDGD) are interaction with MAP3K2/MAP3K3. Residues 116-144 (NIHGLKVNTRAGPSQHTSPVVSDSLPSNS) form a disordered region. Residues 117-131 (IHGLKVNTRAGPSQH) are interaction with MAPK7. Over residues 126–144 (AGPSQHTSPVVSDSLPSNS) the composition is skewed to polar residues. In terms of domain architecture, Protein kinase spans 166-419 (IRYRDTLGHG…PEELMGHPFI (254 aa)). ATP is bound by residues 172-180 (LGHGNGGTV) and K195. Residue D283 is the Proton acceptor of the active site. Phosphoserine is present on S311. The residue at position 315 (T315) is a Phosphothreonine.

This sequence belongs to the protein kinase superfamily. STE Ser/Thr protein kinase family. MAP kinase kinase subfamily. As to quaternary structure, interacts with PARD6A, MAP3K3 and MAPK7. Forms a complex with SQSTM1 and PRKCZ or PRKCI. The cofactor is Mg(2+). Post-translationally, activated by phosphorylation on Ser/Thr by MAP kinase kinase kinases.

It localises to the cytoplasm. The enzyme catalyses L-seryl-[protein] + ATP = O-phospho-L-seryl-[protein] + ADP + H(+). It catalyses the reaction L-threonyl-[protein] + ATP = O-phospho-L-threonyl-[protein] + ADP + H(+). It carries out the reaction L-tyrosyl-[protein] + ATP = O-phospho-L-tyrosyl-[protein] + ADP + H(+). In terms of biological role, acts as a scaffold for the formation of a ternary MAP3K2/MAP3K3-MAP3K5-MAPK7 signaling complex. Activation of this pathway appears to play a critical role in protecting cells from stress-induced apoptosis, neuronal survival and cardiac development and angiogenesis. As part of the MAPK/ERK signaling pathway, acts as a negative regulator of apoptosis in cardiomyocytes via promotion of STUB1/CHIP-mediated ubiquitination and degradation of ICER-type isoforms of CREM. The sequence is that of Dual specificity mitogen-activated protein kinase kinase 5 (Map2k5) from Mus musculus (Mouse).